We begin with the raw amino-acid sequence, 447 residues long: Probable glycine dehydrogenase (decarboxylating) subunit 1 (447 aa).

It belongs to the GcvP family. N-terminal subunit subfamily. As to quaternary structure, the glycine cleavage system is composed of four proteins: P, T, L and H. In this organism, the P 'protein' is a heterodimer of two subunits.

It catalyses the reaction N(6)-[(R)-lipoyl]-L-lysyl-[glycine-cleavage complex H protein] + glycine + H(+) = N(6)-[(R)-S(8)-aminomethyldihydrolipoyl]-L-lysyl-[glycine-cleavage complex H protein] + CO2. In terms of biological role, the glycine cleavage system catalyzes the degradation of glycine. The P protein binds the alpha-amino group of glycine through its pyridoxal phosphate cofactor; CO(2) is released and the remaining methylamine moiety is then transferred to the lipoamide cofactor of the H protein. In Maricaulis maris (strain MCS10) (Caulobacter maris), this protein is Probable glycine dehydrogenase (decarboxylating) subunit 1.